A 190-amino-acid polypeptide reads, in one-letter code: Secreted isochorismatase effector Isc1 (190 aa).

Residues D26, K100, and C133 contribute to the active site.

The protein belongs to the isochorismatase family.

It is found in the secreted. The protein localises to the host cytoplasm. It localises to the host nucleus. It carries out the reaction isochorismate + H2O = (2S,3S)-2,3-dihydroxy-2,3-dihydrobenzoate + pyruvate. In terms of biological role, secreted isochorismatase required for full virulence of V.dahliae. Suppresses salicylate-mediated innate immunity of the host by disrupting the plant salicylate metabolism pathway via hydrolysis of its isochorismate precursor. The chain is Secreted isochorismatase effector Isc1 from Verticillium dahliae (strain VdLs.17 / ATCC MYA-4575 / FGSC 10137) (Verticillium wilt).